The following is a 441-amino-acid chain: MAWKTEVNEVSDDIIDGLWSDDPPLQLESVTKIRRITSQRDISCVIRSGVVPRLVQLLKNQVFPKLQYEVAWALTNIAVDNPGVVVNNNAVPVLIQLIASPKDYVREQAIWTLSNVAGHSIHYRDFVLNSGVLMPLLRLLYKDTTLRIATWALRNLCRGKPHPAFDQVKPALPALEILLHSHDEDVLKNACMALCHLSEGSEDGIQSVIEAGFVPKLVQILQLPSPVVLVPALLTIGAMTAGNHQQTQCVINSGALPIISNMLTRNHENKIKKCACWVISNITAGTKEQIQSVIDANLIPILVNLAQDTDFYMKKEAVWAISNMALNGSHDQIKYMAEQSCIKQLCDILVYSDERTTILKCLDGLENMLKAGEAEKNSEDVNPYCLLIEDAEGLEKISKLQMNKNDDIYEKAYKILVTNWFEEDDENNNNNVRCDDVDFQV.

ARM repeat units follow at residues 39-79 (QRDI…NIAV), 80-118 (DNPG…NVAG), 121-158 (IHYR…NLCR), 160-199 (KPHP…HLSE), 202-241 (EDGI…AMTA), 244-284 (HQQT…NITA), 287-326 (KEQI…NMAL), and 330-370 (HDQI…NMLK).

This sequence belongs to the importin alpha family. In terms of assembly, forms a complex with importin subunit beta-1.

The protein localises to the nucleus envelope. Binds to conventional NLS motifs and mediates nuclear protein import across the nuclear envelope. The chain is Importin subunit alpha-8 from Arabidopsis thaliana (Mouse-ear cress).